The following is a 467-amino-acid chain: ATP-dependent protease ATPase subunit HslU (467 aa).

ATP contacts are provided by residues valine 22 and 64-69 (GVGKTE). Positions 149-192 (QTNNPLESLFGGAIPNFGQNNEDEEEPPTEEIKTKRSEIKRQLE) are disordered. Over residues 178-192 (EEIKTKRSEIKRQLE) the composition is skewed to basic and acidic residues. Residues aspartate 280, glutamate 345, and arginine 417 each coordinate ATP.

Belongs to the ClpX chaperone family. HslU subfamily. A double ring-shaped homohexamer of HslV is capped on each side by a ring-shaped HslU homohexamer. The assembly of the HslU/HslV complex is dependent on binding of ATP.

The protein resides in the cytoplasm. Functionally, ATPase subunit of a proteasome-like degradation complex; this subunit has chaperone activity. The binding of ATP and its subsequent hydrolysis by HslU are essential for unfolding of protein substrates subsequently hydrolyzed by HslV. HslU recognizes the N-terminal part of its protein substrates and unfolds these before they are guided to HslV for hydrolysis. The polypeptide is ATP-dependent protease ATPase subunit HslU (Staphylococcus aureus (strain MW2)).